The following is a 103-amino-acid chain: Toxin BMLCL (103 aa).

The N-terminal stretch at 1-21 (MKTLLLTLVVVTIICLDLGYT) is a signal peptide. 5 disulfide bridges follow: Cys24/Cys45, Cys27/Cys37, Cys38/Cys72, Cys76/Cys90, and Cys91/Cys96.

It belongs to the three-finger toxin family. Ancestral subfamily. Orphan group XVII sub-subfamily. As to expression, expressed by the venom gland.

The protein localises to the secreted. Its function is as follows. Interacts with high efficiency with both neuronal alpha-7/CHRNA7 and muscle type nicotinic acetylcholine receptors (nAChRs). Tested on human alpha-7/CHRNA7 nAChR (IC(50)=42 nM), T.californica muscle receptor (IC(50)=31 nM), L.stagnalis and A.californica acetylcholine-binding proteins (IC(50)=333 nM and 3.4 uM, respectively). The polypeptide is Toxin BMLCL (Bungarus multicinctus (Many-banded krait)).